Here is a 307-residue protein sequence, read N- to C-terminus: MSKVRIAISVGDLNGVGIEIAIKAHEEVSKLCAPLYCINSYMLNQASTLLNYKIPSNFEISEVGGEFAVKKGCVDKDSGRYSYDSFIHAISLCEQKKADAVVTMPIHKEAWMLAGLKYKGHTDLLREHFKRDAIMMLGCQKMFVALFSEHIPLKDVASSIKYKKLKQFFLDFNNSVPNERVAVLGLNPHAGDNGVLGNEELIITKAIKSANKKVCFEQFIGPLVPDIAFTPHIREKFKYFIAMYHDQGLAPLKALYFDESINVSLNLPIIRTSVDHGTAFDIAYEKKAKTLSYINAIKSAIALGERL.

2 residues coordinate substrate: histidine 121 and threonine 122. A divalent metal cation is bound by residues histidine 150, histidine 189, and histidine 245. Residues lysine 253, asparagine 262, and arginine 271 each coordinate substrate.

This sequence belongs to the PdxA family. As to quaternary structure, homodimer. Zn(2+) is required as a cofactor. It depends on Mg(2+) as a cofactor. The cofactor is Co(2+).

Its subcellular location is the cytoplasm. It carries out the reaction 4-(phosphooxy)-L-threonine + NAD(+) = 3-amino-2-oxopropyl phosphate + CO2 + NADH. It functions in the pathway cofactor biosynthesis; pyridoxine 5'-phosphate biosynthesis; pyridoxine 5'-phosphate from D-erythrose 4-phosphate: step 4/5. In terms of biological role, catalyzes the NAD(P)-dependent oxidation of 4-(phosphooxy)-L-threonine (HTP) into 2-amino-3-oxo-4-(phosphooxy)butyric acid which spontaneously decarboxylates to form 3-amino-2-oxopropyl phosphate (AHAP). This is 4-hydroxythreonine-4-phosphate dehydrogenase from Sulfurimonas denitrificans (strain ATCC 33889 / DSM 1251) (Thiomicrospira denitrificans (strain ATCC 33889 / DSM 1251)).